We begin with the raw amino-acid sequence, 637 residues long: Palmitoyltransferase Hip14 (637 aa).

At 1–295 the chain is on the cytoplasmic side; sequence MYQSACQAAT…SKLRHDKRLR (295 aa). 5 ANK repeats span residues 77–106, 111–140, 144–173, 177–207, and 212–242; these read ETVT…TVDA, LNAT…DPRI, EGCS…DPDL, GGMT…NPAM, and HGNT…SLDV. Residues 296 to 315 traverse the membrane as a helical segment; sequence WWSMVACPFTAFYLAGIVFT. At 316–318 the chain is on the lumenal side; sequence VNT. The helical transmembrane segment at 319–341 threads the bilayer; that stretch reads LYIIKFFLLGCLYSIFHTIGKAL. The Cytoplasmic portion of the chain corresponds to 342 to 345; it reads FDEH. The chain crosses the membrane as a helical span at residues 346–366; sequence LMALLPLSVYLATKAWFYVTW. The Lumenal portion of the chain corresponds to 367–373; the sequence is LMYIDDA. Residues 374-394 traverse the membrane as a helical segment; that stretch reads VSFTATVCFLISSLLLWVCFL. Topologically, residues 395-472 are cytoplasmic; it reads KSWKGDPGII…VGNCIGLKNH (78 aa). Residues 430–480 enclose the DHHC domain; it reads SFCSGCLVRRPIRSKHCSVCDRCVARFDHHCPWVGNCIGLKNHSYFMGFLW. The active-site S-palmitoyl cysteine intermediate is the cysteine 460. A helical membrane pass occupies residues 473–493; sequence SYFMGFLWMLLIMCAWMLYGG. Residues 494–520 lie on the Lumenal side of the membrane; the sequence is SKYYVNQCNVRFDDFLGAMRAIGNCDA. Residues 521–541 traverse the membrane as a helical segment; that stretch reads WVGWVMGNALLHMSWVILLTI. Topologically, residues 542–637 are cytoplasmic; the sequence is CQTYQVICLG…DGMAGDHQYV (96 aa).

Belongs to the DHHC palmitoyltransferase family. AKR/ZDHHC17 subfamily. As to quaternary structure, interacts with dorsal-ventral patterning protein Sog. In terms of tissue distribution, in stage 13-15 embryos, expressed in the central nervous system. At the third instar larval stage, expressed in the ventral nerve cord and is enriched in the neuropil.

It is found in the golgi apparatus membrane. The protein resides in the presynaptic cell membrane. It catalyses the reaction L-cysteinyl-[protein] + hexadecanoyl-CoA = S-hexadecanoyl-L-cysteinyl-[protein] + CoA. Its function is as follows. Probable palmitoyltransferase which is required for photoreceptor synaptic transmission and for the correct expression and localization of palmitoylated protein Csp and synaptosomal-associated protein Snap25. Probably palmitoylates Csp. Probably also palmitoylates the dorsal-ventral patterning protein Sog and promotes its secretion and activity and the stabilization of the membrane-bound form. Required for synaptic vesicle exocytosis. This is Palmitoyltransferase Hip14 from Drosophila melanogaster (Fruit fly).